A 538-amino-acid polypeptide reads, in one-letter code: Cytochrome P450 monooxygenase claM (538 aa).

The chain crosses the membrane as a helical span at residues 36 to 56; it reads LSIGLVVLIGAISSFLLQQFL. 2 N-linked (GlcNAc...) asparagine glycosylation sites follow: N306 and N425. C472 contributes to the heme binding site.

It belongs to the cytochrome P450 family. Heme is required as a cofactor.

The protein localises to the membrane. The enzyme catalyses 2 nataloe emodin + reduced [NADPH--hemoprotein reductase] + O2 = cladofulvin + oxidized [NADPH--hemoprotein reductase] + 2 H2O + H(+). The protein operates within pigment biosynthesis. Functionally, cytochrome P450 monooxygenase; part of the gene cluster that mediates the biosynthesis of the bianthraquinone cladofulvin, a conidial pigment not required for virulence but that plays a role in fitness and resistance to environmental stresses including UV light and low-temperature stress. The pathway begins with the synthesis of atrochrysone thioester by the polyketide synthase (PKS) claG. The atrochrysone carboxyl ACP thioesterase claF then breaks the thioester bond and releases the atrochrysone carboxylic acid from claG. This compound is decarboxylated by claH to yield emodin, which is further converted to chrysophanol hydroquinone by the reductase claC and the dehydratase claB. The cytochrome monooxygenase P450 claM then catalyzes the dimerization of nataloe-emodin to cladofulvin. This Passalora fulva (Tomato leaf mold) protein is Cytochrome P450 monooxygenase claM.